The following is a 538-amino-acid chain: Importin subunit alpha-4 (538 aa).

An IBB domain is found at Met1–Gln58. ARM repeat units follow at residues Ser112–Ser152, Ser155–Gly194, Pro197–Arg237, Lys239–Asp278, Asn281–Thr320, Asp323–Ala363, Lys366–Ser405, and His409–Lys448.

Belongs to the importin alpha family. As to quaternary structure, forms a complex with importin subunit beta-1. Interacts with A.tumefaciens VirD2 and VirE2.

Its subcellular location is the nucleus envelope. Its function is as follows. Binds to conventional NLS motifs and mediates nuclear protein import across the nuclear envelope. Acts as a cellular receptor for the nuclear import of the virD2 protein of Agrobacterium and is essential for Agrobacterium-mediated root transformation. The polypeptide is Importin subunit alpha-4 (Arabidopsis thaliana (Mouse-ear cress)).